Reading from the N-terminus, the 302-residue chain is Decaprenyl-phosphate phosphoribosyltransferase (302 aa).

K28 contributes to the 5-phospho-alpha-D-ribose 1-diphosphate binding site. A run of 2 helical transmembrane segments spans residues 30-50 and 55-75; these read VLVL…DYVE and VSMA…VNDV. Y70 serves as a coordination point for 5-phospho-alpha-D-ribose 1-diphosphate. Mg(2+) is bound by residues N73 and D77. A 5-phospho-alpha-D-ribose 1-diphosphate-binding site is contributed by K87. 2 helical membrane passes run 100 to 120 and 122 to 142; these read WLAY…AWML and PNLA…CFGL. K143 and R160 together coordinate 5-phospho-alpha-D-ribose 1-diphosphate. A run of 2 helical transmembrane segments spans residues 146-166 and 170-190; these read AVVE…AGGV and IPLS…MVAG. K191 serves as a coordination point for trans,octa-cis-decaprenyl phosphate. 3 consecutive transmembrane segments (helical) span residues 218–238, 244–264, and 282–302; these read LRFV…LWAF, SGSW…RYAV, and RVLQ…VAFG.

The protein belongs to the UbiA prenyltransferase family. DPPR synthase subfamily. Homotrimer. The cofactor is Mg(2+).

The protein localises to the cell inner membrane. It carries out the reaction trans,octa-cis-decaprenyl phosphate + 5-phospho-alpha-D-ribose 1-diphosphate + H(+) = trans,octa-cis-decaprenylphospho-beta-D-ribofuranose 5-phosphate + diphosphate. It participates in cell wall biogenesis; cell wall polysaccharide biosynthesis. Involved in the biosynthesis of decaprenylphosphoryl arabinose (DPA) a precursor for arabinan synthesis in mycobacterial cell wall biosynthesis. Catalyzes the transfer of a 5-phosphoribosyl residue from phosphoribose diphosphate (PRPP) to decaprenyl phosphate (DP) to form decaprenylphosphoryl-5-phosphoribose (DPPR). This chain is Decaprenyl-phosphate phosphoribosyltransferase, found in Mycobacterium tuberculosis (strain CDC 1551 / Oshkosh).